The following is a 725-amino-acid chain: Ribonuclease R (725 aa).

Residues arginine 236–valine 559 enclose the RNB domain. In terms of domain architecture, S1 motif spans glycine 611–glutamate 689.

The protein belongs to the RNR ribonuclease family. RNase R subfamily.

The protein resides in the cytoplasm. It carries out the reaction Exonucleolytic cleavage in the 3'- to 5'-direction to yield nucleoside 5'-phosphates.. Its function is as follows. 3'-5' exoribonuclease that releases 5'-nucleoside monophosphates and is involved in maturation of structured RNAs. The chain is Ribonuclease R from Mycoplasmopsis pulmonis (strain UAB CTIP) (Mycoplasma pulmonis).